The primary structure comprises 462 residues: MSKLWGGRFTEEAEAWVEEFGASISFDQQLVNQDINGSMAHVTMLAKQGIVTQEEAEKIKIGLQYLLKEAKENKLQFSVEAEDIHLNIEKMLIEQIGEVGGKLHTGRSRNDQVATDMHLYLKEKVEHIIKATKQLQTVLVQQAENNIETIMPGYTHLQRAQPISFAHHILAYFWMLERDVNRYEDSLKRINISPLGAGALAGTTFPIDREYSAELLGFNGIYENSLDAVSDRDFILEFLSNSSMLMMHLSRFCEELILWSSQEFQFIEMSDQYATGSSIMPQKKNPDMAELIRGKTGRVYGNLFSLLTVMKGLPLAYNKDLQEDKEGMFDTVKTVEGCLHIMTGMLETMTVNKEKMGQAVTQDFSNATEIADYLANKGLPFRQAHEIVGKLVLYCTQKGIYLLDVSLETYKEMSSLFEEDLYEVLSPYAAVKRRNSAGGTGFEQIKNALEKAKGLTKEVIKN.

It belongs to the lyase 1 family. Argininosuccinate lyase subfamily.

The protein localises to the cytoplasm. The catalysed reaction is 2-(N(omega)-L-arginino)succinate = fumarate + L-arginine. It participates in amino-acid biosynthesis; L-arginine biosynthesis; L-arginine from L-ornithine and carbamoyl phosphate: step 3/3. The polypeptide is Argininosuccinate lyase (Bacillus cereus (strain ATCC 14579 / DSM 31 / CCUG 7414 / JCM 2152 / NBRC 15305 / NCIMB 9373 / NCTC 2599 / NRRL B-3711)).